The primary structure comprises 424 residues: Dihydroorotase (424 aa).

Zn(2+) contacts are provided by His58 and His60. Substrate is bound by residues 60–62 (HLR) and Asn92. Zn(2+) contacts are provided by Asp150, His177, and His230. Asn276 provides a ligand contact to substrate. Asp303 lines the Zn(2+) pocket. Residue Asp303 is part of the active site. Substrate-binding positions include His307 and 321–322 (FG).

This sequence belongs to the metallo-dependent hydrolases superfamily. DHOase family. Class I DHOase subfamily. Zn(2+) serves as cofactor.

It carries out the reaction (S)-dihydroorotate + H2O = N-carbamoyl-L-aspartate + H(+). The protein operates within pyrimidine metabolism; UMP biosynthesis via de novo pathway; (S)-dihydroorotate from bicarbonate: step 3/3. Its function is as follows. Catalyzes the reversible cyclization of carbamoyl aspartate to dihydroorotate. This Staphylococcus aureus (strain MRSA252) protein is Dihydroorotase.